The chain runs to 150 residues: Large ribosomal subunit protein bL9 (150 aa).

It belongs to the bacterial ribosomal protein bL9 family.

Binds to the 23S rRNA. The chain is Large ribosomal subunit protein bL9 from Streptococcus agalactiae serotype Ia (strain ATCC 27591 / A909 / CDC SS700).